The primary structure comprises 510 residues: 2,3-bisphosphoglycerate-independent phosphoglycerate mutase (510 aa).

D14 and S64 together coordinate Mn(2+). S64 acts as the Phosphoserine intermediate in catalysis. Substrate-binding positions include H125, 155–156 (RD), R187, R193, 259–262 (RADR), and K332. Mn(2+)-binding residues include D399, H403, D440, H441, and H459.

The protein belongs to the BPG-independent phosphoglycerate mutase family. Monomer. Mn(2+) is required as a cofactor.

The catalysed reaction is (2R)-2-phosphoglycerate = (2R)-3-phosphoglycerate. The protein operates within carbohydrate degradation; glycolysis; pyruvate from D-glyceraldehyde 3-phosphate: step 3/5. Its function is as follows. Catalyzes the interconversion of 2-phosphoglycerate and 3-phosphoglycerate. This Pseudomonas syringae pv. syringae (strain B728a) protein is 2,3-bisphosphoglycerate-independent phosphoglycerate mutase.